The sequence spans 61 residues: Protein CopA/IncA (61 aa).

Functionally, controls the copy number in gene replication. The polypeptide is Protein CopA/IncA (copA) (Escherichia coli).